The sequence spans 247 residues: MKQIDLNVDLAEGCANDQQLLQLVSSANVCCGLHAGDYNEIRKAILWAKENDVRIGAHPSFPDRENFGRTNMQLPDDELKACLFYQLGAVKALCDASGVTMEYVKPHGALYNMAAKDPHLAALIAETVKSVDPSLKLMGLSGSIMLTVAEQHGLATISEVFADRHYLADGSLVPRTRDDAMVENDEEAISQVLQMVLEGTVPTVDGGNVAIKADSICLHGDGEHAVVFAKRIRRELKEKGILVTSSI.

It belongs to the LamB/PxpA family. Forms a complex composed of PxpA, PxpB and PxpC.

It catalyses the reaction 5-oxo-L-proline + ATP + 2 H2O = L-glutamate + ADP + phosphate + H(+). Its function is as follows. Catalyzes the cleavage of 5-oxoproline to form L-glutamate coupled to the hydrolysis of ATP to ADP and inorganic phosphate. The polypeptide is 5-oxoprolinase subunit A (Histophilus somni (strain 129Pt) (Haemophilus somnus)).